A 325-amino-acid polypeptide reads, in one-letter code: HPr kinase/phosphorylase (325 aa).

Active-site residues include His152 and Lys173. 167 to 174 (GESGLGKS) is an ATP binding site. Residue Ser174 coordinates Mg(2+). Catalysis depends on Asp191, which acts as the Proton acceptor; for phosphorylation activity. Proton donor; for dephosphorylation activity. An important for the catalytic mechanism of both phosphorylation and dephosphorylation region spans residues 215-224 (LEVRGIGLLD). Position 216 (Glu216) interacts with Mg(2+). Residue Arg258 is part of the active site. The interval 279 to 284 (AVDAGR) is important for the catalytic mechanism of dephosphorylation.

This sequence belongs to the HPrK/P family. As to quaternary structure, homohexamer. Mg(2+) is required as a cofactor.

It carries out the reaction [HPr protein]-L-serine + ATP = [HPr protein]-O-phospho-L-serine + ADP + H(+). The enzyme catalyses [HPr protein]-O-phospho-L-serine + phosphate + H(+) = [HPr protein]-L-serine + diphosphate. Functionally, catalyzes the ATP- as well as the pyrophosphate-dependent phosphorylation of a specific serine residue in HPr, a phosphocarrier protein of the phosphoenolpyruvate-dependent sugar phosphotransferase system (PTS). HprK/P also catalyzes the pyrophosphate-producing, inorganic phosphate-dependent dephosphorylation (phosphorolysis) of seryl-phosphorylated HPr (P-Ser-HPr). The polypeptide is HPr kinase/phosphorylase (Leptothrix cholodnii (strain ATCC 51168 / LMG 8142 / SP-6) (Leptothrix discophora (strain SP-6))).